Reading from the N-terminus, the 1692-residue chain is Tyrosine-protein phosphatase non-receptor type 23 (1692 aa).

Residues 8–394 (PMIWLDLKEA…AKIEDKNEVL (387 aa)) enclose the BRO1 domain. TPR repeat units follow at residues 250–283 (AVAH…LNEA) and 374–407 (EEKA…DPET). Residues 552 to 639 (KAVLQNLKRI…RALTEANVQY (88 aa)) are a coiled coil. Disordered regions lie at residues 711 to 788 (DREL…PATH), 884 to 923 (DSVQ…PQPQ), and 944 to 1199 (TYSI…LLQP). Phosphothreonine is present on Thr744. The segment at 773–1186 (HFSPGPFPSS…SSSPESQHGG (414 aa)) is his. Residues 774–785 (FSPGPFPSSTGP) are compositionally biased toward low complexity. A compositionally biased stretch (polar residues) spans 884 to 894 (DSVQAPISSHT). Over residues 897–923 (RPNPTPALPQPCFPVPQPVPQSVPQPQ) the composition is skewed to pro residues. An Omega-N-methylarginine modification is found at Arg974. A run of 21 repeats spans residues 977 to 978 (PQ), 979 to 980 (AQ), 981 to 982 (AQ), 983 to 984 (PQ), 985 to 986 (PQ), 987 to 988 (PQ), 989 to 990 (PQ), 991 to 992 (PQ), 993 to 994 (PQ), 995 to 996 (PQ), 997 to 998 (PQ), 999 to 1000 (PQ), 1001 to 1002 (PQ), 1003 to 1004 (PQ), 1005 to 1006 (SQ), 1007 to 1008 (SQ), 1009 to 1010 (PQ), 1011 to 1012 (PQ), 1013 to 1014 (PQ), 1015 to 1016 (PQ), and 1017 to 1018 (PQ). Residues 977–1018 (PQAQAQPQPQPQPQPQPQPQPQPQPQPQSQSQPQPQPQPQPQ) are 21 X 2 AA approximate tandem repeats of P-Q. A compositionally biased stretch (pro residues) spans 984-1002 (QPQPQPQPQPQPQPQPQPQ). Composition is skewed to pro residues over residues 1093-1102 (FPSPGPPHPH) and 1127-1165 (GPPP…PPPC). Phosphoserine occurs at positions 1178 and 1179. Phosphothreonine is present on Thr1187. Residues 1248–1508 (DAIWRELQEA…KFCHEALVRH (261 aa)) enclose the Tyrosine-protein phosphatase domain. The active-site Phosphocysteine intermediate is Cys1448. The interval 1574–1638 (ASLPGLVEPP…PSSSLELLAS (65 aa)) is disordered. Over residues 1598-1612 (SSSPPPLSSPLPEAP) the composition is skewed to pro residues. Residues 1620–1638 (VPEAPSLGPPSSSLELLAS) are compositionally biased toward low complexity. An Omega-N-methylarginine modification is found at Arg1671.

The protein belongs to the protein-tyrosine phosphatase family. Non-receptor class subfamily. As to quaternary structure, interacts with GRAP2 and GRB2. Interacts with UBAP1 and CHMP4B.

It localises to the nucleus. The protein localises to the cytoplasm. Its subcellular location is the cytoplasmic vesicle. It is found in the endosome. The protein resides in the cytoskeleton. It localises to the cilium basal body. The enzyme catalyses O-phospho-L-tyrosyl-[protein] + H2O = L-tyrosyl-[protein] + phosphate. Its function is as follows. Plays a role in sorting of endocytic ubiquitinated cargos into multivesicular bodies (MVBs) via its interaction with the ESCRT-I complex (endosomal sorting complex required for transport I), and possibly also other ESCRT complexes. May act as a negative regulator of Ras-mediated mitogenic activity. Plays a role in ciliogenesis. The sequence is that of Tyrosine-protein phosphatase non-receptor type 23 (Ptpn23) from Mus musculus (Mouse).